The chain runs to 271 residues: Undecaprenyl-diphosphatase 2 (271 aa).

8 helical membrane-spanning segments follow: residues 1 to 21 (MNFFQAIILAIAQGVSELFPI), 46 to 66 (NFLEFVVMMHIGTTISLIVYF), 88 to 108 (ALIVIGTIPAIILGAIFEQTI), 111 to 131 (AFSDVIVASIFLIFNGLLLFF), 146 to 166 (LKGWQALVIGCFQSLALIPGF), 190 to 210 (SMLLSTPMVAGAATLEIPKLI), 220 to 240 (LSLIGGIVAGLAAFLSIYILM), and 251 to 271 (MLPFAIYCIVIGIGVLASKAI).

It belongs to the UppP family.

The protein localises to the cell membrane. The enzyme catalyses di-trans,octa-cis-undecaprenyl diphosphate + H2O = di-trans,octa-cis-undecaprenyl phosphate + phosphate + H(+). In terms of biological role, catalyzes the dephosphorylation of undecaprenyl diphosphate (UPP). Confers resistance to bacitracin. The protein is Undecaprenyl-diphosphatase 2 of Oenococcus oeni (strain ATCC BAA-331 / PSU-1).